The following is a 553-amino-acid chain: Copine-9 (553 aa).

C2 domains follow at residues 1–125 (MSLS…ERPL) and 132–255 (KCGT…FTVY). Ca(2+) contacts are provided by aspartate 163, aspartate 169, aspartate 225, aspartate 227, and aspartate 233. Positions 299-500 (NFTVAIDFTA…VQFVPFRDYV (202 aa)) constitute a VWFA domain. The disordered stretch occupies residues 531 to 553 (TRDIQPRPPPPVSPNPTPAPEQP). Over residues 536-553 (PRPPPPVSPNPTPAPEQP) the composition is skewed to pro residues.

This sequence belongs to the copine family. Requires Ca(2+) as cofactor.

Probable calcium-dependent phospholipid-binding protein that may play a role in calcium-mediated intracellular processes. Plays a role in dendrite formation by melanocytes. In Mus musculus (Mouse), this protein is Copine-9.